We begin with the raw amino-acid sequence, 462 residues long: Polygalacturonase (462 aa).

A signal peptide spans 1 to 22; that stretch reads MALTRLLLPISILWFCFYSSHT. Residue Asn173 is glycosylated (N-linked (GlcNAc...) asparagine). The active-site Proton donor is the Asp278. A disulfide bond links Cys280 and Cys297. An N-linked (GlcNAc...) asparagine glycan is attached at Asn294. His301 is a catalytic residue. Asn358 carries N-linked (GlcNAc...) asparagine glycosylation. Cystine bridges form between Cys407-Cys413 and Cys435-Cys460.

It belongs to the glycosyl hydrolase 28 family.

Its subcellular location is the secreted. It localises to the cell wall. It catalyses the reaction (1,4-alpha-D-galacturonosyl)n+m + H2O = (1,4-alpha-D-galacturonosyl)n + (1,4-alpha-D-galacturonosyl)m.. Functionally, acts in concert with the pectinesterase, in the ripening process. Is involved in cell wall metabolism, specifically in polyuronide degradation. This Persea americana (Avocado) protein is Polygalacturonase.